The following is a 77-amino-acid chain: Small ribosomal subunit protein bS16 (77 aa).

This sequence belongs to the bacterial ribosomal protein bS16 family.

The protein is Small ribosomal subunit protein bS16 of Wolinella succinogenes (strain ATCC 29543 / DSM 1740 / CCUG 13145 / JCM 31913 / LMG 7466 / NCTC 11488 / FDC 602W) (Vibrio succinogenes).